The chain runs to 774 residues: DNA ligase (774 aa).

NAD(+)-binding positions include 36–40 (DAVYD), 85–86 (SL), and glutamate 161. Lysine 163 functions as the N6-AMP-lysine intermediate in the catalytic mechanism. Arginine 184, glutamate 221, lysine 341, and lysine 365 together coordinate NAD(+). Zn(2+) contacts are provided by cysteine 459, cysteine 462, cysteine 477, and cysteine 482. In terms of domain architecture, BRCT spans 693-774 (VQSGLLRGKT…LLEALAVTGI (82 aa)).

Belongs to the NAD-dependent DNA ligase family. LigA subfamily. Requires Mg(2+) as cofactor. Mn(2+) is required as a cofactor.

The enzyme catalyses NAD(+) + (deoxyribonucleotide)n-3'-hydroxyl + 5'-phospho-(deoxyribonucleotide)m = (deoxyribonucleotide)n+m + AMP + beta-nicotinamide D-nucleotide.. Functionally, DNA ligase that catalyzes the formation of phosphodiester linkages between 5'-phosphoryl and 3'-hydroxyl groups in double-stranded DNA using NAD as a coenzyme and as the energy source for the reaction. It is essential for DNA replication and repair of damaged DNA. This is DNA ligase from Trichodesmium erythraeum (strain IMS101).